We begin with the raw amino-acid sequence, 176 residues long: Crossover junction endodeoxyribonuclease RuvC (176 aa).

Active-site residues include Asp9, Glu69, and Asp141. Residues Asp9, Glu69, and Asp141 each contribute to the Mg(2+) site.

It belongs to the RuvC family. Homodimer which binds Holliday junction (HJ) DNA. The HJ becomes 2-fold symmetrical on binding to RuvC with unstacked arms; it has a different conformation from HJ DNA in complex with RuvA. In the full resolvosome a probable DNA-RuvA(4)-RuvB(12)-RuvC(2) complex forms which resolves the HJ. Requires Mg(2+) as cofactor.

Its subcellular location is the cytoplasm. It carries out the reaction Endonucleolytic cleavage at a junction such as a reciprocal single-stranded crossover between two homologous DNA duplexes (Holliday junction).. In terms of biological role, the RuvA-RuvB-RuvC complex processes Holliday junction (HJ) DNA during genetic recombination and DNA repair. Endonuclease that resolves HJ intermediates. Cleaves cruciform DNA by making single-stranded nicks across the HJ at symmetrical positions within the homologous arms, yielding a 5'-phosphate and a 3'-hydroxyl group; requires a central core of homology in the junction. The consensus cleavage sequence is 5'-(A/T)TT(C/G)-3'. Cleavage occurs on the 3'-side of the TT dinucleotide at the point of strand exchange. HJ branch migration catalyzed by RuvA-RuvB allows RuvC to scan DNA until it finds its consensus sequence, where it cleaves and resolves the cruciform DNA. This chain is Crossover junction endodeoxyribonuclease RuvC, found in Chromobacterium violaceum (strain ATCC 12472 / DSM 30191 / JCM 1249 / CCUG 213 / NBRC 12614 / NCIMB 9131 / NCTC 9757 / MK).